The chain runs to 669 residues: DNA ligase (669 aa).

NAD(+)-binding positions include 33–37 (DAEYD), 82–83 (SL), and Glu114. Residue Lys116 is the N6-AMP-lysine intermediate of the active site. NAD(+)-binding residues include Arg137, Glu174, Lys291, and Lys315. Residues Cys409, Cys412, Cys427, and Cys433 each coordinate Zn(2+). The BRCT domain occupies 593-669 (EIPQPLAGKV…QTEQDLLALL (77 aa)).

Belongs to the NAD-dependent DNA ligase family. LigA subfamily. Mg(2+) serves as cofactor. Mn(2+) is required as a cofactor.

The catalysed reaction is NAD(+) + (deoxyribonucleotide)n-3'-hydroxyl + 5'-phospho-(deoxyribonucleotide)m = (deoxyribonucleotide)n+m + AMP + beta-nicotinamide D-nucleotide.. In terms of biological role, DNA ligase that catalyzes the formation of phosphodiester linkages between 5'-phosphoryl and 3'-hydroxyl groups in double-stranded DNA using NAD as a coenzyme and as the energy source for the reaction. It is essential for DNA replication and repair of damaged DNA. The polypeptide is DNA ligase (Vibrio vulnificus (strain YJ016)).